A 1813-amino-acid polypeptide reads, in one-letter code: Sucrase-isomaltase, intestinal (1813 aa).

Over 1 to 12 (MARKKSSGLKIT) the chain is Cytoplasmic. Serine 7 is modified (phosphoserine; by PKA). A helical; Signal-anchor for type II membrane protein transmembrane segment spans residues 13–32 (LIVLLAIVTIIAIALVAILP). The Lumenal segment spans residues 33 to 1813 (TKTPAVELVS…LDEPIEISWT (1781 aa)). One can recognise a P-type 1 domain in the interval 46 to 95 (GKCPSAENDRLDEKINCIPDQFPTQALCAMQGCCWNPRNESPTPWCSFAN). Disulfide bonds link cysteine 48/cysteine 79, cysteine 62/cysteine 78, and cysteine 73/cysteine 91. The interval 95 to 991 (NNHGYEFEKI…DLELNTATAR (897 aa)) is isomaltase. Asparagine 127 is a glycosylation site (N-linked (GlcNAc...) asparagine). Residues aspartate 250 and aspartate 374 each coordinate substrate. The residue at position 377 (tyrosine 377) is a Sulfotyrosine. Asparagine 388 carries an N-linked (GlcNAc...) asparagine glycan. Catalysis depends on aspartate 491, which acts as the Nucleophile; for isomaltase activity. Cysteine 506 and cysteine 531 are disulfide-bonded. Arginine 574 contributes to the substrate binding site. Catalysis depends on aspartate 590, which acts as the For isomaltase activity. Cysteine 621 and cysteine 632 form a disulfide bridge. Position 648 (histidine 648) interacts with substrate. N-linked (GlcNAc...) asparagine glycosylation is found at asparagine 669, asparagine 791, asparagine 896, and asparagine 911. The region spanning 917-962 (NQVSLDSEKIDCFPDNNPENKQNCEERGCLWEPNSAAEGPRCYFPK) is the P-type 2 domain. The segment at 992-1813 (IKMPSNPISV…LDEPIEISWT (822 aa)) is sucrase. N-linked (GlcNAc...) asparagine glycosylation is found at asparagine 1221 and asparagine 1289. The residue at position 1294 (tyrosine 1294) is a Sulfotyrosine. N-linked (GlcNAc...) asparagine glycosylation is found at asparagine 1326 and asparagine 1340. Sulfotyrosine is present on residues tyrosine 1368 and tyrosine 1371. Aspartate 1380 functions as the Nucleophile; for sucrase activity in the catalytic mechanism. Glutamate 1383 acts as the For sucrase activity in catalysis. N-linked (GlcNAc...) asparagine glycosylation occurs at asparagine 1432. Aspartate 1486 serves as the catalytic Proton donor; for sucrase activity. N-linked (GlcNAc...) asparagine glycosylation is found at asparagine 1521, asparagine 1545, asparagine 1558, asparagine 1703, and asparagine 1772.

This sequence belongs to the glycosyl hydrolase 31 family. As to quaternary structure, the resulting sucrase and isomaltase subunits stay associated with one another in a complex by non-covalent linkages. The precursor is proteolytically cleaved when exposed to pancreatic proteases in the intestinal lumen. Post-translationally, sulfated.

The protein resides in the apical cell membrane. It carries out the reaction Hydrolysis of sucrose and maltose by an alpha-D-glucosidase-type action.. The enzyme catalyses Hydrolysis of (1-&gt;6)-alpha-D-glucosidic linkages in some oligosaccharides produced from starch and glycogen by alpha-amylase, and in isomaltose.. Plays an important role in the final stage of carbohydrate digestion. Isomaltase activity is specific for both alpha-1,4- and alpha-1,6-oligosaccharides. This Suncus murinus (Asian house shrew) protein is Sucrase-isomaltase, intestinal (SI).